A 347-amino-acid chain; its full sequence is Heme A synthase (347 aa).

Helical transmembrane passes span 17–37, 106–126, 132–152, 165–185, 202–222, 260–280, 295–315, and 317–337; these read LANW…VGGI, GIGA…AIPA, MIGI…MVYS, LATH…TVLD, ALAI…AFVA, IVVQ…ALAV, AVAT…LTGV, and IAVA…LLWA. Residue histidine 266 coordinates heme. Histidine 323 is a heme binding site.

Belongs to the COX15/CtaA family. Type 2 subfamily. In terms of assembly, interacts with CtaB. Heme b serves as cofactor.

Its subcellular location is the cell membrane. The catalysed reaction is Fe(II)-heme o + 2 A + H2O = Fe(II)-heme a + 2 AH2. Its pathway is porphyrin-containing compound metabolism; heme A biosynthesis; heme A from heme O: step 1/1. Functionally, catalyzes the conversion of heme O to heme A by two successive hydroxylations of the methyl group at C8. The first hydroxylation forms heme I, the second hydroxylation results in an unstable dihydroxymethyl group, which spontaneously dehydrates, resulting in the formyl group of heme A. This Rhizorhabdus wittichii (strain DSM 6014 / CCUG 31198 / JCM 15750 / NBRC 105917 / EY 4224 / RW1) (Sphingomonas wittichii) protein is Heme A synthase.